The primary structure comprises 353 residues: Transcription termination/antitermination protein NusG (353 aa).

The 35-residue stretch at 301-335 (VGDMVKIISGPFEDFAGVIKEIDPERQELKVNVTI) folds into the KOW domain.

Belongs to the NusG family.

Regulated by autoinhibition via interaction of the N-terminal and the C-terminal domains. Autoinhibition may prevent NusG from interacting prematurely with other components of the transcription complex or non-specific interactions with other cellular components. In terms of biological role, participates in transcription elongation, termination and antitermination. This Thermotoga maritima (strain ATCC 43589 / DSM 3109 / JCM 10099 / NBRC 100826 / MSB8) protein is Transcription termination/antitermination protein NusG.